Reading from the N-terminus, the 269-residue chain is Energy-coupling factor transporter ATP-binding protein EcfA1 (269 aa).

Residues 8–242 (IEFKDVSFQY…EEALISVGLD (235 aa)) form the ABC transporter domain. ATP is bound at residue 42-49 (GHNGSGKS).

Belongs to the ABC transporter superfamily. Energy-coupling factor EcfA family. Forms a stable energy-coupling factor (ECF) transporter complex composed of 2 membrane-embedded substrate-binding proteins (S component), 2 ATP-binding proteins (A component) and 2 transmembrane proteins (T component).

It localises to the cell membrane. Its function is as follows. ATP-binding (A) component of a common energy-coupling factor (ECF) ABC-transporter complex. Unlike classic ABC transporters this ECF transporter provides the energy necessary to transport a number of different substrates. In Staphylococcus epidermidis (strain ATCC 35984 / DSM 28319 / BCRC 17069 / CCUG 31568 / BM 3577 / RP62A), this protein is Energy-coupling factor transporter ATP-binding protein EcfA1.